Here is a 202-residue protein sequence, read N- to C-terminus: Small ribosomal subunit protein uS4 (202 aa).

Residues 91-168 enclose the S4 RNA-binding domain; that stretch reads SRLSSVLYNS…QKVPDYLEVD (78 aa).

It belongs to the universal ribosomal protein uS4 family. As to quaternary structure, part of the 30S ribosomal subunit. Contacts protein S5. The interaction surface between S4 and S5 is involved in control of translational fidelity.

Functionally, one of the primary rRNA binding proteins, it binds directly to 16S rRNA where it nucleates assembly of the body of the 30S subunit. Its function is as follows. With S5 and S12 plays an important role in translational accuracy. This is Small ribosomal subunit protein uS4 from Ehrlichia chaffeensis (strain ATCC CRL-10679 / Arkansas).